Reading from the N-terminus, the 154-residue chain is Jupiter microtubule associated homolog 1 (154 aa).

Met1 carries the N-acetylmethionine modification. A compositionally biased stretch (polar residues) spans 1–19 (MTTTTTFKGVDPNSRNSSR). The segment at 1-154 (MTTTTTFKGV…PGGKSSLVLG (154 aa)) is disordered. An N-acetylthreonine; in Hematological and neurological expressed 1 protein, N-terminally processed modification is found at Thr2. A phosphoserine mark is found at Ser28 and Ser31. The residue at position 54 (Thr54) is a Phosphothreonine. Residues Ser71, Ser87, Ser88, and Ser92 each carry the phosphoserine modification. The segment covering 79–91 (SPGTQRSNSSEAS) has biased composition (polar residues). Basic and acidic residues predominate over residues 96-108 (LDLKGEGDMHENV). A compositionally biased stretch (pro residues) spans 125–138 (PAAPVPSPVAPAPV). The residue at position 131 (Ser131) is a Phosphoserine. An N6-acetyllysine modification is found at Lys148.

This sequence belongs to the JUPITER family. In terms of assembly, interacts with the complex composed, at least, of APC, CTNNB1 and GSK3B; the interaction takes place with the inactive form of GSK3B (phosphorylated at 'Ser-9'). In terms of tissue distribution, expressed in yolk sac, fetal brain, brain, spleen and bone marrow.

It is found in the nucleus. Its subcellular location is the cytoplasm. Functionally, modulates negatively AKT-mediated GSK3B signaling. Induces CTNNB1 'Ser-33' phosphorylation and degradation through the suppression of the inhibitory 'Ser-9' phosphorylation of GSK3B, which represses the function of the APC:CTNNB1:GSK3B complex and the interaction with CDH1/E-cadherin in adherent junctions. Plays a role in the regulation of cell cycle and cell adhesion. Has an inhibitory role on AR-signaling pathway through the induction of receptor proteasomal degradation. This Mus musculus (Mouse) protein is Jupiter microtubule associated homolog 1.